Consider the following 347-residue polypeptide: NAD-dependent alcohol dehydrogenase (347 aa).

Position 11 is an N6-methyllysine; partial (K11). C38, H68, E98, C101, C104, C112, and C154 together coordinate Zn(2+). K213 is modified (N6-methyllysine; partial).

It belongs to the zinc-containing alcohol dehydrogenase family. In terms of assembly, homodimer and homotetramer. Requires Zn(2+) as cofactor.

The enzyme catalyses a primary alcohol + NAD(+) = an aldehyde + NADH + H(+). It catalyses the reaction a secondary alcohol + NAD(+) = a ketone + NADH + H(+). This Saccharolobus solfataricus (strain ATCC 35092 / DSM 1617 / JCM 11322 / P2) (Sulfolobus solfataricus) protein is NAD-dependent alcohol dehydrogenase (adh).